Reading from the N-terminus, the 710-residue chain is multidrug resistance regulator 2 (710 aa).

Residues 11–37 (CDACRSRKIKCNRQTPCASCHKSKRDC) constitute a DNA-binding region (zn(2)-C6 fungal-type). 2 helical membrane-spanning segments follow: residues 475–495 (DLVI…LYLF) and 525–545 (LFLA…TNFL).

The protein localises to the nucleus. The protein resides in the membrane. Its function is as follows. Transcription factor that controls the expression of CDR1, the major multidrug efflux pump. Required for yeast cell adherence to silicone substrate and plays a role in virulence. This chain is multidrug resistance regulator 2, found in Candida albicans (strain SC5314 / ATCC MYA-2876) (Yeast).